The primary structure comprises 380 residues: Protein Wnt-5a (380 aa).

The first 37 residues, 1 to 37 (MKKPIGILSPGVALGTAGGAMSSKFFLMALATFFSFA), serve as a signal peptide directing secretion. A propeptide spanning residues 38–61 (QVVIEANSWWSLGMNNPVQMSEVY) is cleaved from the precursor. Residues cysteine 104 and cysteine 115 are joined by a disulfide bond. N-linked (GlcNAc...) asparagine glycosylation is found at asparagine 114 and asparagine 120. Intrachain disulfides connect cysteine 154/cysteine 162, cysteine 164/cysteine 182, cysteine 238/cysteine 252, cysteine 240/cysteine 247, cysteine 309/cysteine 340, cysteine 325/cysteine 335, cysteine 339/cysteine 379, cysteine 355/cysteine 370, cysteine 357/cysteine 367, and cysteine 362/cysteine 363. Serine 244 carries the O-palmitoleoyl serine; by PORCN lipid modification. 2 N-linked (GlcNAc...) asparagine glycosylation sites follow: asparagine 312 and asparagine 326.

This sequence belongs to the Wnt family. Forms a soluble 1:1 complex with AFM; this prevents oligomerization and is required for prolonged biological activity. The complex with AFM may represent the physiological form in body fluids. Homooligomer; disulfide-linked, leading to inactivation. Interacts with PORCN. Interacts with WLS. Interacts with glypican GCP3. Interacts with PKD1 (via extracellular domain). Interacts with TMEM67. In terms of processing, glycosylation is necessary for secretion but not for activity. Palmitoleoylation is required for efficient binding to frizzled receptors. Depalmitoleoylation leads to Wnt signaling pathway inhibition. Post-translationally, proteolytic processing by TIKI1 and TIKI2 promotes oxidation and formation of large disulfide-bond oligomers, leading to inactivation of WNT5A. As to expression, expressed in a gradient at the caudal end of the embryo during gastrulation and later in the distal-most aspect of several structures that extend from the body such as the limbs and genital tubercle.

Its subcellular location is the secreted. The protein localises to the extracellular space. The protein resides in the extracellular matrix. Ligand for members of the frizzled family of seven transmembrane receptors. Can activate or inhibit canonical Wnt signaling, depending on receptor context. In the presence of FZD4, activates beta-catenin signaling. In the presence of ROR2, inhibits the canonical Wnt pathway by promoting beta-catenin degradation through a GSK3-independent pathway which involves down-regulation of beta-catenin-induced reporter gene expression. Suppression of the canonical pathway allows chondrogenesis to occur and inhibits tumor formation. Stimulates cell migration. Decreases proliferation, migration, invasiveness and clonogenicity of carcinoma cells and may act as a tumor suppressor. Mediates motility of melanoma cells. Required during embryogenesis for extension of the primary anterior-posterior axis and for outgrowth of limbs and the genital tubercle. Inhibits type II collagen expression in chondrocytes. This is Protein Wnt-5a (Wnt5a) from Mus musculus (Mouse).